Here is a 94-residue protein sequence, read N- to C-terminus: Small ribosomal subunit protein bS6 (94 aa).

This sequence belongs to the bacterial ribosomal protein bS6 family.

Its function is as follows. Binds together with bS18 to 16S ribosomal RNA. The protein is Small ribosomal subunit protein bS6 of Clostridium botulinum (strain Hall / ATCC 3502 / NCTC 13319 / Type A).